The primary structure comprises 187 residues: Peptidyl-tRNA hydrolase (187 aa).

Residue Tyr14 coordinates tRNA. His19 serves as the catalytic Proton acceptor. TRNA is bound by residues Tyr60, Asn62, and Asn108.

This sequence belongs to the PTH family. As to quaternary structure, monomer.

The protein resides in the cytoplasm. The catalysed reaction is an N-acyl-L-alpha-aminoacyl-tRNA + H2O = an N-acyl-L-amino acid + a tRNA + H(+). Functionally, hydrolyzes ribosome-free peptidyl-tRNAs (with 1 or more amino acids incorporated), which drop off the ribosome during protein synthesis, or as a result of ribosome stalling. In terms of biological role, catalyzes the release of premature peptidyl moieties from peptidyl-tRNA molecules trapped in stalled 50S ribosomal subunits, and thus maintains levels of free tRNAs and 50S ribosomes. This Mycoplasmopsis synoviae (strain 53) (Mycoplasma synoviae) protein is Peptidyl-tRNA hydrolase.